Consider the following 469-residue polypeptide: tRNA-2-methylthio-N(6)-dimethylallyladenosine synthase (469 aa).

The MTTase N-terminal domain occupies 22–142; the sequence is RKVFIKTYGC…LPEALRRAKE (121 aa). [4Fe-4S] cluster contacts are provided by Cys-31, Cys-67, Cys-105, Cys-183, Cys-187, and Cys-190. In terms of domain architecture, Radical SAM core spans 169–401; sequence RARGVTAFLT…QALLLKQQQE (233 aa). One can recognise a TRAM domain in the interval 404–466; the sequence is ESCIGKEIDL…NNSLFAERAE (63 aa).

The protein belongs to the methylthiotransferase family. MiaB subfamily. As to quaternary structure, monomer. [4Fe-4S] cluster serves as cofactor.

It localises to the cytoplasm. The catalysed reaction is N(6)-dimethylallyladenosine(37) in tRNA + (sulfur carrier)-SH + AH2 + 2 S-adenosyl-L-methionine = 2-methylsulfanyl-N(6)-dimethylallyladenosine(37) in tRNA + (sulfur carrier)-H + 5'-deoxyadenosine + L-methionine + A + S-adenosyl-L-homocysteine + 2 H(+). Functionally, catalyzes the methylthiolation of N6-(dimethylallyl)adenosine (i(6)A), leading to the formation of 2-methylthio-N6-(dimethylallyl)adenosine (ms(2)i(6)A) at position 37 in tRNAs that read codons beginning with uridine. This is tRNA-2-methylthio-N(6)-dimethylallyladenosine synthase from Rhizobium leguminosarum bv. trifolii (strain WSM2304).